Reading from the N-terminus, the 823-residue chain is Protein Jade-3 (823 aa).

The tract at residues 1–32 (MKRHRPVSSSDSSDESPSTSFTSGSMYRIKSK) is disordered. Over residues 8–25 (SSSDSSDESPSTSFTSGS) the composition is skewed to low complexity. N6-acetyllysine occurs at positions 30 and 32. The residue at position 85 (Ser85) is a Phosphoserine. The segment at 200 to 250 (DVICDVCRSPDSEEGNDMVFCDKCNVCVHQACYGILKVPEGSWLCRSCVLG) adopts a PHD-type 1 zinc-finger fold. A C2HC pre-PHD-type zinc finger spans residues 252–286 (YPQCVLCPKKGGALKTTKTGTKWAHVSCALWIPEV). Residues 310 to 366 (LVCNLCKLKTGACIQCSIKSCITAFHVTCAFEHGLEMKTILDEGDEVKFKSYCLKHS) form a PHD-type 2 zinc finger. Disordered stretches follow at residues 372 to 395 (LGEA…KTSL) and 542 to 576 (KLKM…VHSI). Residues 561 to 575 (DQQPHSPDSSSSVHS) are compositionally biased toward low complexity. Ser566 is subject to Phosphoserine. Lys601 carries the post-translational modification N6-acetyllysine. Ser608 is modified (phosphoserine). Residues 609–630 (LSHSRSEAKESSPAWRTPSSEC) are disordered. Residue Lys638 is modified to N6-acetyllysine. Composition is skewed to polar residues over residues 650 to 664 (SSIG…SKFA) and 673 to 684 (WSGNVTQKDSSS). The tract at residues 650 to 684 (SSIGNGKSQPNSKFAKSNGLEGSWSGNVTQKDSSS) is disordered. Lys735 bears the N6-acetyllysine mark. Residues 758–823 (RAPYQENDGY…HPLSHSSMQR (66 aa)) are disordered. Residues Ser774, Ser776, and Ser780 each carry the phosphoserine modification. The span at 781 to 809 (DGNKEKVRVRKDSSDRENPPHDSRRDCHG) shows a compositional bias: basic and acidic residues.

It belongs to the JADE family. Component of the HBO1 complex composed at least of ING4 or ING5, KAT7/HBO1, MEAF6, and one of JADE1, JADE2 and JADE3. Ubiquitously expressed, with highest levels in placenta and uterus.

Scaffold subunit of some HBO1 complexes, which have a histone H4 acetyltransferase activity. In Homo sapiens (Human), this protein is Protein Jade-3 (JADE3).